We begin with the raw amino-acid sequence, 430 residues long: Small ribosomal subunit protein uS3m (430 aa).

The protein belongs to the universal ribosomal protein uS3 family.

The protein resides in the mitochondrion. This chain is Small ribosomal subunit protein uS3m (RPS3), found in Marchantia polymorpha (Common liverwort).